The primary structure comprises 143 residues: Type II secretion system core protein G (143 aa).

A propeptide spans 1–17 (MIKRSITRSPSRAGQAG) (leader sequence). Met18 bears the N-methylmethionine mark. The chain crosses the membrane as a helical span at residues 18 to 38 (MSLLEIIIVIVLIGAVLTLVG).

The protein belongs to the GSP G family. Type II secretion system is composed of four main components: the outer membrane complex, the inner membrane complex, the cytoplasmic secretion ATPase and the periplasm-spanning pseudopilus. Forms homomultimers. Interacts with pseudopilin tip complex component XpsJ as well as XpsI and XcpH. Interacts with XpsN and secretin XpsD. Cleaved by the prepilin peptidase. Post-translationally, methylated by prepilin peptidase at the amino group of the N-terminal methionine once the leader sequence is cleaved.

It localises to the cell inner membrane. In terms of biological role, core component of the type II secretion system required for the energy-dependent secretion of extracellular factors such as proteases and toxins from the periplasm. Pseudopilin (pilin-like) protein that polymerizes to form the pseudopilus. Further polymerization triggers pseudopilus growth. This is Type II secretion system core protein G (xpsG) from Xanthomonas campestris pv. campestris (strain ATCC 33913 / DSM 3586 / NCPPB 528 / LMG 568 / P 25).